A 203-amino-acid polypeptide reads, in one-letter code: MGSQWTKDSVYRKAMKAGYRARAAYKLLEIQQRNGIIRPDDNVVDLGAAPGSWLQVLRDLTDGRVIGVDLNPIAPMEGVTTIVGDFTDPLVQERIREEAGGVVSVVVSDASPKLSGQKSYDQARAIGLGEDALAFACTVLKPGGNMVIKSFQGELFGELIAETRKHFYSVRGYRTKASRKGSAETYIIAKNFKGTCDDAEGPL.

S-adenosyl-L-methionine contacts are provided by Gly51, Trp53, Asp69, Asp85, and Asp109. The active-site Proton acceptor is the Lys149.

It belongs to the class I-like SAM-binding methyltransferase superfamily. RNA methyltransferase RlmE family.

The protein localises to the cytoplasm. The catalysed reaction is uridine(2552) in 23S rRNA + S-adenosyl-L-methionine = 2'-O-methyluridine(2552) in 23S rRNA + S-adenosyl-L-homocysteine + H(+). In terms of biological role, specifically methylates the uridine in position 2552 of 23S rRNA at the 2'-O position of the ribose in the fully assembled 50S ribosomal subunit. The protein is Ribosomal RNA large subunit methyltransferase E of Methanoculleus marisnigri (strain ATCC 35101 / DSM 1498 / JR1).